A 163-amino-acid polypeptide reads, in one-letter code: MAEARHAPLKDQTSVSGARVLIVEARFYDDIQDALLEGAVAELQSAGVRHDVVTVPGALEIPAAIVFALDAAERRGEPYDAVVALGCVVRGDTIHFEIVSMESARALMDLSVKRGVALGNGIITVDTDAQAWARARAGELNKGGHAAQAALTMLRMKRRLAKA.

Residues Phe-27, 58 to 60 (ALE), and 87 to 89 (CVV) contribute to the 5-amino-6-(D-ribitylamino)uracil site. Position 92–93 (92–93 (DT)) interacts with (2S)-2-hydroxy-3-oxobutyl phosphate. His-95 acts as the Proton donor in catalysis. Asn-120 contacts 5-amino-6-(D-ribitylamino)uracil. Arg-134 contacts (2S)-2-hydroxy-3-oxobutyl phosphate.

It belongs to the DMRL synthase family.

The catalysed reaction is (2S)-2-hydroxy-3-oxobutyl phosphate + 5-amino-6-(D-ribitylamino)uracil = 6,7-dimethyl-8-(1-D-ribityl)lumazine + phosphate + 2 H2O + H(+). Its pathway is cofactor biosynthesis; riboflavin biosynthesis; riboflavin from 2-hydroxy-3-oxobutyl phosphate and 5-amino-6-(D-ribitylamino)uracil: step 1/2. In terms of biological role, catalyzes the formation of 6,7-dimethyl-8-ribityllumazine by condensation of 5-amino-6-(D-ribitylamino)uracil with 3,4-dihydroxy-2-butanone 4-phosphate. This is the penultimate step in the biosynthesis of riboflavin. This chain is 6,7-dimethyl-8-ribityllumazine synthase, found in Nitrobacter winogradskyi (strain ATCC 25391 / DSM 10237 / CIP 104748 / NCIMB 11846 / Nb-255).